The primary structure comprises 84 residues: U1-hexatoxin-Iw1a (84 aa).

The N-terminal stretch at 1–18 (MLKFVVVICLVIMAITFA) is a signal peptide. Disulfide bonds link Cys21–Cys32, Cys26–Cys40, Cys31–Cys66, Cys50–Cys74, and Cys68–Cys81.

It belongs to the MIT-like AcTx family. In terms of tissue distribution, expressed by the venom gland.

It is found in the secreted. The chain is U1-hexatoxin-Iw1a from Illawarra wisharti (Illawarra funnel-web spider).